We begin with the raw amino-acid sequence, 212 residues long: Probable GTP-binding protein EngB (212 aa).

Residues 27 to 201 (GGIEIAFAGR…TRILSDWYQP (175 aa)) form the EngB-type G domain. GTP-binding positions include 35–42 (GRSNAGKS), 62–66 (GRTQL), 80–83 (DLPG), 147–150 (TKAD), and 180–182 (FSS). Positions 42 and 64 each coordinate Mg(2+).

The protein belongs to the TRAFAC class TrmE-Era-EngA-EngB-Septin-like GTPase superfamily. EngB GTPase family. The cofactor is Mg(2+).

Its function is as follows. Necessary for normal cell division and for the maintenance of normal septation. This chain is Probable GTP-binding protein EngB, found in Tolumonas auensis (strain DSM 9187 / NBRC 110442 / TA 4).